The following is a 461-amino-acid chain: Transforming growth factor beta-1-induced transcript 1 protein (461 aa).

The residue at position 1 (Met1) is an N-acetylmethionine. The segment at 1-86 (MEDLDALLSD…PPFSSSSGVL (86 aa)) is disordered. The segment at 1–200 (MEDLDALLSD…GCPSPPGQTN (200 aa)) is transcription activation. Positions 1–240 (MEDLDALLSD…CNKPIAGQVV (240 aa)) are interaction with PTK2B/PYK2. The LD motif 1 signature appears at 3–15 (DLDALLSDLETTT). A Phosphothreonine modification is found at Thr33. A Phosphotyrosine modification is found at Tyr38. Residues 41–52 (QPQTGSGESSGA) are compositionally biased toward polar residues. At Tyr60 the chain carries Phosphotyrosine; by FAK2 and FYN. Position 68 is a phosphoserine (Ser68). Over residues 69–83 (PKSVAPVAPPFSSSS) the composition is skewed to low complexity. An interaction with PTK2/FAK1 region spans residues 83 to 136 (SGVLGNGLCELDRLLQELNATQFNITDEIMSQFPSSKMAEGEGKEDQSEDKSIT). An LD motif 2 motif is present at residues 92–104 (ELDRLLQELNATQ). Residues 116-154 (PSSKMAEGEGKEDQSEDKSITTVPSSTFPAPSKPSATSA) are disordered. Basic and acidic residues predominate over residues 121–134 (AEGEGKEDQSEDKS). Over residues 135 to 154 (ITTVPSSTFPAPSKPSATSA) the composition is skewed to polar residues. Phosphoserine occurs at positions 140, 141, 164, and 186. The LD motif 3 signature appears at 157–168 (ELDRLMASLSDF). The tract at residues 171 to 204 (QNHLPASGPPQPPAVSPTREGCPSPPGQTNKGSL) is disordered. Residue Thr188 is modified to Phosphothreonine. Phosphoserine is present on Ser194. An LD motif 4 motif is present at residues 203-215 (SLDTMLGLLQSDL). LIM zinc-binding domains are found at residues 226 to 285 (GLCG…RFSP), 286 to 343 (RCGF…QLFA), 344 to 403 (PRCQ…QRGS), and 404 to 461 (LCAT…KLFG). The residue at position 403 (Ser403) is a Phosphoserine. Thr407 carries the post-translational modification Phosphothreonine.

Belongs to the paxillin family. Homooligomer. Interacts with PPARG. Interacts with TRAF4. Interacts with CRIP2. Interacts with HSPB1. Interacts with ILK. Interacts with LIMS1 and LIMS2. Interacts with NCK2. Interacts with NUDT16L1. Interacts with PAK. Interacts with PTPN12. Interacts with TCF3. Interacts with TCF7L2. Interacts with VCL. Interacts (via LD motif 3) with GIT1. Also interacts with GIT2. Forms a complex with ARHGEF7. Interacts with AR/androgen receptor in a ligand-dependent manner. Interacts with CSK. Interacts with PTK2/FAK1 and PTK2B/PYK2. Interacts with SLC6A3 and SLC6A4. Interacts with NR3C1. Interacts with SMAD3. Interacts with MAPK15. Interacts with SRC. Interacts with LYN. Interacts with talin. Interacts (via LIM zinc-binding domain 2) with CBLC (via RING-type zinc finger); the interaction is direct and enhances CBLC E3 ubiquitin-protein ligase activity. Interacts with PARVA. Interacts with PXN. Post-translationally, phosphorylated by gonadotropin-releasing hormone-activated SRC. In terms of tissue distribution, strongly expressed in large intestine, lung, spleen, testis, uterus and to a lower extent in brain, kidney and liver (at protein level). In brain, expressed by neuronal and non neuronal cells (at protein level).

The protein resides in the cell junction. Its subcellular location is the focal adhesion. It localises to the nucleus matrix. It is found in the cytoplasm. The protein localises to the cytoskeleton. Functionally, functions as a molecular adapter coordinating multiple protein-protein interactions at the focal adhesion complex and in the nucleus. Links various intracellular signaling modules to plasma membrane receptors and regulates the Wnt and TGFB signaling pathways. May also regulate SLC6A3 and SLC6A4 targeting to the plasma membrane hence regulating their activity. In the nucleus, functions as a nuclear receptor coactivator regulating glucocorticoid, androgen, mineralocorticoid and progesterone receptor transcriptional activity. May play a role in the processes of cell growth, proliferation, migration, differentiation and senescence. May have a zinc-dependent DNA-binding activity. The chain is Transforming growth factor beta-1-induced transcript 1 protein (Tgfb1i1) from Rattus norvegicus (Rat).